The chain runs to 347 residues: Palmitoyltransferase ZDHHC19 (347 aa).

A run of 2 helical transmembrane segments spans residues 29–49 and 59–79; these read VFAA…FGFP and WAFP…LVSL. The 51-residue stretch at 112–162 folds into the DHHC domain; it reads EWCPKCLFHRPPRTYHCPWCNICVEDFDHHCKWVNNCIGHRNFRLFMLLVL. Cys-142 functions as the S-palmitoyl cysteine intermediate in the catalytic mechanism. 2 helical membrane passes run 156 to 176 and 194 to 214; these read LFML…VTCL and AILV…LLLI. The disordered stretch occupies residues 275–347; it reads IQEKTKPSPP…PTAEPAAGDP (73 aa).

The protein belongs to the DHHC palmitoyltransferase family.

The protein resides in the golgi apparatus membrane. It localises to the cytoplasm. The protein localises to the perinuclear region. The catalysed reaction is L-cysteinyl-[protein] + hexadecanoyl-CoA = S-hexadecanoyl-L-cysteinyl-[protein] + CoA. Functionally, palmitoyltransferase that mediates palmitoylation oproteins, such as RRAS and SQSTM1. Catalyzes palmitoylation of RRAS, leading to increased cell viability. Acts as a positive regulator of autophagy by mediating palmitoylation of SQSTM1, promoting affinity between SQSTM1 and ATG8 proteins and recruitment of ubiquitinated cargo proteins to autophagosomes. The polypeptide is Palmitoyltransferase ZDHHC19 (Zdhhc19) (Mus musculus (Mouse)).